The primary structure comprises 274 residues: Penicillin-insensitive murein endopeptidase (274 aa).

Residues 1–19 form the signal peptide; sequence MKNTVIALLALLASAGSLA. Intrachain disulfides connect Cys44–Cys265, Cys187–Cys235, and Cys216–Cys223. Zn(2+)-binding residues include His110, His113, Asp120, Asp147, His150, and His211. Positions 224–263 are disordered; sequence EDQAPPPPGDGCGAELQSWFEPPKPGSTPPVKKTPPPLPP. The segment covering 245–263 has biased composition (pro residues); that stretch reads PPKPGSTPPVKKTPPPLPP.

The protein belongs to the peptidase M74 family. As to quaternary structure, dimer. Zn(2+) is required as a cofactor.

The protein resides in the periplasm. Murein endopeptidase that cleaves the D-alanyl-meso-2,6-diamino-pimelyl amide bond that connects peptidoglycan strands. Likely plays a role in the removal of murein from the sacculus. This Klebsiella pneumoniae (strain 342) protein is Penicillin-insensitive murein endopeptidase.